The sequence spans 247 residues: MSGHSKWSTIKHKKGAADAKRGKIFTKLIKEITVAARMGGGDIDSNPRLRGAVAAAKAQNMPKDNLERAIKKGTGDLEGVDYEEILYEGYGPGGVAILVECLTDNKNRTIADVRYIFSKAGGNIGTDGCVAWMFDKKGLITISKEESDEDTLMEVGLEAGAEDVTDEGDCFEIITDPADFDAVKGAVEAAGIKIEMAEVTMIPQTQTRLEGKEAEQMVRFMDALDDCDDIQKFYSNADIPDEVYDAM.

This sequence belongs to the TACO1 family.

The protein resides in the cytoplasm. The chain is Probable transcriptional regulatory protein HRM2_04000 from Desulforapulum autotrophicum (strain ATCC 43914 / DSM 3382 / VKM B-1955 / HRM2) (Desulfobacterium autotrophicum).